The sequence spans 288 residues: Shikimate dehydrogenase (NADP(+)) (288 aa).

Shikimate-binding positions include 14-16 and T63; that span reads SIS. K67 acts as the Proton acceptor in catalysis. E79 lines the NADP(+) pocket. Shikimate is bound by residues N88 and D103. NADP(+)-binding positions include 127 to 131, 151 to 156, and M219; these read GSGGA and NRTYEK. Y221 serves as a coordination point for shikimate. Residue G242 participates in NADP(+) binding.

This sequence belongs to the shikimate dehydrogenase family. As to quaternary structure, homodimer.

The catalysed reaction is shikimate + NADP(+) = 3-dehydroshikimate + NADPH + H(+). Its pathway is metabolic intermediate biosynthesis; chorismate biosynthesis; chorismate from D-erythrose 4-phosphate and phosphoenolpyruvate: step 4/7. Its function is as follows. Involved in the biosynthesis of the chorismate, which leads to the biosynthesis of aromatic amino acids. Catalyzes the reversible NADPH linked reduction of 3-dehydroshikimate (DHSA) to yield shikimate (SA). The sequence is that of Shikimate dehydrogenase (NADP(+)) from Caldicellulosiruptor bescii (strain ATCC BAA-1888 / DSM 6725 / KCTC 15123 / Z-1320) (Anaerocellum thermophilum).